Consider the following 37-residue polypeptide: Large ribosomal subunit protein bL36 (37 aa).

It belongs to the bacterial ribosomal protein bL36 family.

The chain is Large ribosomal subunit protein bL36 (rpmJ) from Geobacillus stearothermophilus (Bacillus stearothermophilus).